Reading from the N-terminus, the 347-residue chain is RNA 3'-terminal phosphate cyclase (347 aa).

Residues Gln101 and 286 to 289 (HMAD) each bind ATP. His312 serves as the catalytic Tele-AMP-histidine intermediate.

The protein belongs to the RNA 3'-terminal cyclase family. Type 1 subfamily.

It localises to the cytoplasm. The enzyme catalyses a 3'-end 3'-phospho-ribonucleotide-RNA + ATP = a 3'-end 2',3'-cyclophospho-ribonucleotide-RNA + AMP + diphosphate. In terms of biological role, catalyzes the conversion of 3'-phosphate to a 2',3'-cyclic phosphodiester at the end of RNA. The mechanism of action of the enzyme occurs in 3 steps: (A) adenylation of the enzyme by ATP; (B) transfer of adenylate to an RNA-N3'P to produce RNA-N3'PP5'A; (C) and attack of the adjacent 2'-hydroxyl on the 3'-phosphorus in the diester linkage to produce the cyclic end product. The biological role of this enzyme is unknown but it is likely to function in some aspects of cellular RNA processing. The sequence is that of RNA 3'-terminal phosphate cyclase from Pyrobaculum neutrophilum (strain DSM 2338 / JCM 9278 / NBRC 100436 / V24Sta) (Thermoproteus neutrophilus).